A 466-amino-acid chain; its full sequence is Ribulose bisphosphate carboxylase large chain (466 aa).

Position 5 is an N6,N6,N6-trimethyllysine (lysine 5). Substrate is bound by residues asparagine 114 and threonine 164. Lysine 166 (proton acceptor) is an active-site residue. Lysine 168 provides a ligand contact to substrate. Mg(2+) contacts are provided by lysine 192, aspartate 194, and glutamate 195. At lysine 192 the chain carries N6-carboxylysine. Histidine 285 serves as the catalytic Proton acceptor. Positions 286, 318, and 370 each coordinate substrate.

This sequence belongs to the RuBisCO large chain family. Type I subfamily. In terms of assembly, heterohexadecamer of 8 large chains and 8 small chains; disulfide-linked. The disulfide link is formed within the large subunit homodimers. Mg(2+) is required as a cofactor. In terms of processing, the disulfide bond which can form in the large chain dimeric partners within the hexadecamer appears to be associated with oxidative stress and protein turnover.

It is found in the plastid. The protein resides in the chloroplast. It catalyses the reaction 2 (2R)-3-phosphoglycerate + 2 H(+) = D-ribulose 1,5-bisphosphate + CO2 + H2O. The catalysed reaction is D-ribulose 1,5-bisphosphate + O2 = 2-phosphoglycolate + (2R)-3-phosphoglycerate + 2 H(+). RuBisCO catalyzes two reactions: the carboxylation of D-ribulose 1,5-bisphosphate, the primary event in carbon dioxide fixation, as well as the oxidative fragmentation of the pentose substrate in the photorespiration process. Both reactions occur simultaneously and in competition at the same active site. The sequence is that of Ribulose bisphosphate carboxylase large chain from Caltha palustris (Yellow marsh marigold).